The sequence spans 141 residues: Actin-depolymerizing factor 9 (141 aa).

Ser8 carries the phosphoserine modification. An ADF-H domain is found at 8-141 (SGMWMTDDCK…GFDKIQDRAK (134 aa)).

The protein belongs to the actin-binding proteins ADF family.

The protein resides in the cytoplasm. It is found in the cytoskeleton. Does not display typical F-actin depolymerizing activity. Exhibits a high ability to stabilize and cross-link actin filaments. Functions as an actin bundling protein with the highest efficiency under acidic conditions. May play a role in the modulation of levels of histone H3 lysine 4 trimethylation and H3 lysine 9 and 14 acetylation at the FLC locus. This chain is Actin-depolymerizing factor 9 (ADF9), found in Arabidopsis thaliana (Mouse-ear cress).